The primary structure comprises 147 residues: Deoxyuridine 5'-triphosphate nucleotidohydrolase (147 aa).

Residues 63–65 (RSG), Asn-76, and 80–82 (TID) each bind substrate.

This sequence belongs to the dUTPase family. Mg(2+) is required as a cofactor.

It catalyses the reaction dUTP + H2O = dUMP + diphosphate + H(+). It functions in the pathway pyrimidine metabolism; dUMP biosynthesis; dUMP from dCTP (dUTP route): step 2/2. Its function is as follows. This enzyme is involved in nucleotide metabolism: it produces dUMP, the immediate precursor of thymidine nucleotides and it decreases the intracellular concentration of dUTP so that uracil cannot be incorporated into DNA. The polypeptide is Deoxyuridine 5'-triphosphate nucleotidohydrolase (Chlamydia abortus (strain DSM 27085 / S26/3) (Chlamydophila abortus)).